A 1427-amino-acid chain; its full sequence is DNA-directed RNA polymerase subunit beta' (1427 aa).

Residues Cys66, Cys68, Cys81, and Cys84 each contribute to the Zn(2+) site. Mg(2+) is bound by residues Asp472, Asp474, and Asp476. Positions 815, 889, 896, and 899 each coordinate Zn(2+).

The protein belongs to the RNA polymerase beta' chain family. As to quaternary structure, the RNAP catalytic core consists of 2 alpha, 1 beta, 1 beta' and 1 omega subunit. When a sigma factor is associated with the core the holoenzyme is formed, which can initiate transcription. The cofactor is Mg(2+). It depends on Zn(2+) as a cofactor.

The catalysed reaction is RNA(n) + a ribonucleoside 5'-triphosphate = RNA(n+1) + diphosphate. DNA-dependent RNA polymerase catalyzes the transcription of DNA into RNA using the four ribonucleoside triphosphates as substrates. In Bacteroides thetaiotaomicron (strain ATCC 29148 / DSM 2079 / JCM 5827 / CCUG 10774 / NCTC 10582 / VPI-5482 / E50), this protein is DNA-directed RNA polymerase subunit beta'.